Consider the following 212-residue polypeptide: Putative 3-methyladenine DNA glycosylase (212 aa).

The protein belongs to the DNA glycosylase MPG family.

This Psychrobacter cryohalolentis (strain ATCC BAA-1226 / DSM 17306 / VKM B-2378 / K5) protein is Putative 3-methyladenine DNA glycosylase.